We begin with the raw amino-acid sequence, 1099 residues long: Glutamine--fructose-6-phosphate aminotransferase [isomerizing] (1099 aa).

Cysteine 2 serves as the catalytic Nucleophile; for GATase activity. The Glutamine amidotransferase type-2; first part domain occupies 2-71 (CGIIGYIGND…DIDGNIGIGH (70 aa)). One can recognise an HTH cro/C1-type domain in the interval 198–253 (LRKVREKLGLTRKDVEKLCGVKEIYIVKIETGKLESIEEERLKKLCSLYGINFEEI). Residues 278 to 413 (IIGYIIGDGH…IQFLLLRFGI (136 aa)) form the DOD-type homing endonuclease domain. The 153-residue stretch at 571–723 (SRWATHGNVC…DGDVVVIKKK (153 aa)) folds into the Glutamine amidotransferase type-2; second part domain. 2 SIS domains span residues 786–923 (LAKC…LLGR) and 948–1089 (TIKE…VDKP). Residue lysine 1094 is the For Fru-6P isomerization activity of the active site.

This sequence in the C-terminal section; belongs to the SIS family. GFAT subfamily. Homodimer. This protein undergoes a protein self splicing that involves a post-translational excision of the intervening region (intein) followed by peptide ligation.

It localises to the cytoplasm. The catalysed reaction is D-fructose 6-phosphate + L-glutamine = D-glucosamine 6-phosphate + L-glutamate. Functionally, catalyzes the first step in hexosamine metabolism, converting fructose-6P into glucosamine-6P using glutamine as a nitrogen source. The protein is Glutamine--fructose-6-phosphate aminotransferase [isomerizing] (glmS) of Methanocaldococcus jannaschii (strain ATCC 43067 / DSM 2661 / JAL-1 / JCM 10045 / NBRC 100440) (Methanococcus jannaschii).